The primary structure comprises 481 residues: MVRFQRRKLLASCLCVTATVFLMVTLQVVVELGKFERKKLKDSNVQDGHRDVEGEPKHLEPFPEKEALALAGRTKVDAGSYPIVLWWSPLTGETGRLGQCGADACFFTINRTFQHHPMTRAFLFYGTDFNIDSLPLPREAHHDWALFHEESPKNNYKLFHKPVITLFNHTATFSRHSHLPLTTQYLEGVDVLKSLRYLVPLQAKNNLRQKLAPLVYVQSDCDPPSDRDSYVRELMAYIEVDSYGECLQNRDLPQQLKNPASMDADAFYRVIAQYKFILAFENAVCDDYITEKFWRPLKLGVVPVYYGSPTIADWLPSNRSAILVSEFSHPRELASFIRRLDYDDGLYETYVEWKLKGKISNQRLLTALNEREWGVQDINQDNYIDSFECMVCRRVWANSRLQEQGLPPKQWKADVSHLHCPEPALFTFSSPASPALRGRSLRELWLPSFQQSKKEAQALRWLVDRNQNFSSEEFWALVFKD.

The Cytoplasmic segment spans residues 1 to 8 (MVRFQRRK). A helical; Signal-anchor for type II membrane protein transmembrane segment spans residues 9-31 (LLASCLCVTATVFLMVTLQVVVE). Residues 32–481 (LGKFERKKLK…EEFWALVFKD (450 aa)) are Lumenal-facing. N-linked (GlcNAc...) asparagine glycosylation is found at Asn110, Asn168, and Asn318. Cysteines 389 and 392 form a disulfide. N-linked (GlcNAc...) asparagine glycosylation is present at Asn468.

This sequence belongs to the glycosyltransferase 10 family. Widely expressed, with a higher expression in liver and thymus.

Its subcellular location is the endoplasmic reticulum membrane. The enzyme catalyses L-threonyl-[protein] + GDP-beta-L-fucose = 3-O-(alpha-L-fucosyl)-L-threonyl-[protein] + GDP + H(+). It catalyses the reaction L-seryl-[protein] + GDP-beta-L-fucose = 3-O-(alpha-L-fucosyl)-L-seryl-[protein] + GDP + H(+). The protein operates within protein modification; protein glycosylation. Protein O-fucosyltransferase that specifically catalyzes O-fucosylation of serine or threonine residues in EMI domains of target proteins, such as MMRN1, MMRN2 and EMID1. Attaches fucose through an O-glycosidic linkage. O-fucosylation of EMI domain-containing proteins may be required for facilitating protein folding and secretion. May also show alpha-(1,3)-fucosyltransferase activity toward the innermost N-acetyl glucosamine (GlcNAc) residue in biantennary N-glycan acceptors. However, this was tested with a library of synthetic substrates and this activity is unsure in vivo. May be involved in biosynthesis of Lewis X-carrying biantennary N-glycans that regulate neuron stem cell self-renewal during brain development. The polypeptide is GDP-fucose protein O-fucosyltransferase 3 (Mus musculus (Mouse)).